We begin with the raw amino-acid sequence, 419 residues long: Transcription termination factor Rho (419 aa).

In terms of domain architecture, Rho RNA-BD spans 48 to 123 (DIFGDGVLEI…LKVNEVNYDK (76 aa)). RNA-binding regions lie at residues 61–66 (GFGFLR), 78–80 (DIY), and 108–110 (ERY). Residues 169 to 174 (GRGQRG), 181 to 186 (KAGKTI), and Arg-212 contribute to the ATP site. The segment at 284-288 (VLTGG) is RNA-binding 2.

The protein belongs to the Rho family. As to quaternary structure, homohexamer. The homohexamer assembles into an open ring structure.

In terms of biological role, facilitates transcription termination by a mechanism that involves Rho binding to the nascent RNA, activation of Rho's RNA-dependent ATPase activity, and release of the mRNA from the DNA template. This Buchnera aphidicola subsp. Acyrthosiphon pisum (strain APS) (Acyrthosiphon pisum symbiotic bacterium) protein is Transcription termination factor Rho.